We begin with the raw amino-acid sequence, 596 residues long: Thioredoxin reductase 1, mitochondrial (596 aa).

The interval 59–87 (LTGQRGSRDSTGATGGNAPAGSGAGAPPP) is disordered. Over residues 68–79 (STGATGGNAPAG) the composition is skewed to low complexity. FAD is bound by residues 120–126 (IGGGSAG), 143–147 (LDFVK), 159–170 (GGTCVNVGCIPK), 233–235 (GLG), 262–266 (AVGGR), S282, F286, and Y302. C162 and C167 form a disulfide bridge. Residues 322-328 (VRSIVLR) and P355 contribute to the NADP(+) site. Residues 392–399 (RKGLVDDL), 429–432 (VGDI), 438–443 (ELTPVA), and F472 contribute to the FAD site. The Proton acceptor role is filled by H569. P570 is a binding site for FAD. A disulfide bridge links C594 with C595.

The protein belongs to the class-I pyridine nucleotide-disulfide oxidoreductase family. As to quaternary structure, homodimer. FAD is required as a cofactor. As to expression, during embryogenesis, expression is seen in germ cell progenitors, developing midgut, hindgut and proventriculus.

The protein resides in the mitochondrion. Its subcellular location is the cytoplasm. The enzyme catalyses [thioredoxin]-dithiol + NADP(+) = [thioredoxin]-disulfide + NADPH + H(+). In terms of biological role, thioredoxin system is a major player in glutathione metabolism, due to the demonstrated absence of a glutathione reductase. Functionally interacts with the Sod/Cat reactive oxidation species (ROS) defense system and thereby has a role in preadult development and life span. Lack of a glutathione reductase suggests antioxidant defense in Drosophila, and probably in related insects, differs fundamentally from that in other organisms. The chain is Thioredoxin reductase 1, mitochondrial from Drosophila melanogaster (Fruit fly).